The primary structure comprises 650 residues: DNA mismatch repair protein MutL (650 aa).

Residues 374 to 420 (SSLPDTQRSQRQPEKAASGQRSSVDAGLSQGSSAHRASQTGLGQSGN) form a disordered region. Residues 392–420 (GQRSSVDAGLSQGSSAHRASQTGLGQSGN) are compositionally biased toward polar residues.

Belongs to the DNA mismatch repair MutL/HexB family.

This protein is involved in the repair of mismatches in DNA. It is required for dam-dependent methyl-directed DNA mismatch repair. May act as a 'molecular matchmaker', a protein that promotes the formation of a stable complex between two or more DNA-binding proteins in an ATP-dependent manner without itself being part of a final effector complex. This Shewanella amazonensis (strain ATCC BAA-1098 / SB2B) protein is DNA mismatch repair protein MutL.